The primary structure comprises 92 residues: MGKGGNYVMVAASEVEELRQKNGEMEKAVEEMRKEMLQLWRRTQVAEEAEEHLCSQLAELEAESLDQARDYHTRIIFLTNQLSRFSSDSASP.

Residues 8-63 (VMVAASEVEELRQKNGEMEKAVEEMRKEMLQLWRRTQVAEEAEEHLCSQLAELEAE) are a coiled coil.

In terms of biological role, required for flower development in short-day conditions. This is Protein RESPONSE TO LOW SULFUR 4 from Arabidopsis thaliana (Mouse-ear cress).